A 212-amino-acid polypeptide reads, in one-letter code: Inactive ribonuclease-like protein 10 (212 aa).

Positions 1–24 (MKLTLVQIFFMMLLLLLGLGVGLG) are cleaved as a signal peptide.

Belongs to the pancreatic ribonuclease family. In terms of processing, the N-terminus is blocked. Glycosylated. Male-specific expression in proximal caput of the epididymis.

Its subcellular location is the secreted. Functionally, secreted proximal epididymal protein required for post-testicular sperm maturation and male fertility. May be involved in sperm adhesion to the egg zona pellucida. Does not have ribonuclease activity. This Ovis aries (Sheep) protein is Inactive ribonuclease-like protein 10 (RNASE10).